The following is a 266-amino-acid chain: UPF0328 protein ECU05_1610/ECU11_0120 (266 aa).

Belongs to the UPF0328 family.

The sequence is that of UPF0328 protein ECU05_1610/ECU11_0120 from Encephalitozoon cuniculi (strain GB-M1) (Microsporidian parasite).